A 420-amino-acid chain; its full sequence is Phosphoglycerate kinase, cytosolic (420 aa).

(2R)-3-phosphoglycerate-binding residues include V23, D24, F25, N26, R39, S61, H62, G64, R65, R135, H171, and R172. G217 serves as a coordination point for ADP. Position 217 (G217) interacts with CDP. K219 serves as a coordination point for (2R)-3-phosphoglycerate. An AMP-binding site is contributed by K219. A CDP-binding site is contributed by D222. D222 is a Mg(2+) binding site. ADP-binding residues include K223 and G241. K223 contributes to the AMP binding site. An ATP-binding site is contributed by K223. G241 lines the CDP pocket. Positions 242 and 314 each coordinate AMP. Residues A242 and A314 each contribute to the ATP site. ADP-binding residues include A314 and N338. CDP contacts are provided by G339 and F344. Positions 344, 345, 377, and 378 each coordinate ADP. Residue E345 participates in AMP binding. ATP-binding residues include E345, D377, and S378. A Mg(2+)-binding site is contributed by D377.

This sequence belongs to the phosphoglycerate kinase family. As to quaternary structure, monomer. It depends on Mg(2+) as a cofactor.

It is found in the cytoplasm. The catalysed reaction is (2R)-3-phosphoglycerate + ATP = (2R)-3-phospho-glyceroyl phosphate + ADP. It functions in the pathway carbohydrate degradation; glycolysis; pyruvate from D-glyceraldehyde 3-phosphate: step 2/5. The sequence is that of Phosphoglycerate kinase, cytosolic (C1PGK) from Trypanosoma congolense.